Here is a 225-residue protein sequence, read N- to C-terminus: Imidazole glycerol phosphate synthase subunit HisH (225 aa).

In terms of domain architecture, Glutamine amidotransferase type-1 spans 3–225 (TIAIVDYGMG…LYRNFVDWQP (223 aa)). C82 serves as the catalytic Nucleophile. Active-site residues include H205 and E207.

Heterodimer of HisH and HisF.

The protein resides in the cytoplasm. It carries out the reaction 5-[(5-phospho-1-deoxy-D-ribulos-1-ylimino)methylamino]-1-(5-phospho-beta-D-ribosyl)imidazole-4-carboxamide + L-glutamine = D-erythro-1-(imidazol-4-yl)glycerol 3-phosphate + 5-amino-1-(5-phospho-beta-D-ribosyl)imidazole-4-carboxamide + L-glutamate + H(+). It catalyses the reaction L-glutamine + H2O = L-glutamate + NH4(+). Its pathway is amino-acid biosynthesis; L-histidine biosynthesis; L-histidine from 5-phospho-alpha-D-ribose 1-diphosphate: step 5/9. IGPS catalyzes the conversion of PRFAR and glutamine to IGP, AICAR and glutamate. The HisH subunit catalyzes the hydrolysis of glutamine to glutamate and ammonia as part of the synthesis of IGP and AICAR. The resulting ammonia molecule is channeled to the active site of HisF. The chain is Imidazole glycerol phosphate synthase subunit HisH from Bordetella bronchiseptica (strain ATCC BAA-588 / NCTC 13252 / RB50) (Alcaligenes bronchisepticus).